Here is a 314-residue protein sequence, read N- to C-terminus: Olfactory receptor 1468 (314 aa).

Over 1-25 (MTEENQTVISQFLLLGLPIPSEHQH) the chain is Extracellular. Asn5 is a glycosylation site (N-linked (GlcNAc...) asparagine). The helical transmembrane segment at 26 to 49 (VFYALFLSMYLTTVLGNLIIIILI) threads the bilayer. At 50–57 (HLDSHLHT) the chain is on the cytoplasmic side. Residues 58-79 (PMYLFLSNLSFSDLCFSSVTMP) form a helical membrane-spanning segment. The Extracellular portion of the chain corresponds to 80–100 (KLLQNMQSQVPSIPFAGCLTQ). A disulfide bridge connects residues Cys97 and Cys189. Residues 101–120 (LYFYLYFADLESFLLVAMAY) form a helical membrane-spanning segment. Residues 121-139 (DRYVAICFPLHYMSIMSPK) are Cytoplasmic-facing. The chain crosses the membrane as a helical span at residues 140 to 158 (LCVSLVVLSWVLTTFHAML). The Extracellular portion of the chain corresponds to 159-196 (HTLLMARLSFCADNMIPHFFCDISPLLKLSCSDTHVNE). The helical transmembrane segment at 197-219 (LVIFVMGGLVIVIPFVLIIVSYA) threads the bilayer. Residues 220–236 (RVVASILKVPSVRGIHK) are Cytoplasmic-facing. Residues 237–260 (IFSTCGSHLSVVSLFYGTIIGLYL) form a helical membrane-spanning segment. Topologically, residues 261 to 272 (CPSANNSTVKET) are extracellular. Residues 273–292 (VMAMMYTVVTPMLNPFIYSL) form a helical membrane-spanning segment. The Cytoplasmic portion of the chain corresponds to 293–314 (RNRDMKEALIRVLCKKKITFCL).

This sequence belongs to the G-protein coupled receptor 1 family. In terms of tissue distribution, olfactory epithelium.

The protein resides in the cell membrane. Functionally, odorant receptor. In Rattus norvegicus (Rat), this protein is Olfactory receptor 1468 (Olr1468).